The sequence spans 358 residues: Heme A synthase (358 aa).

Transmembrane regions (helical) follow at residues 25 to 45, 111 to 131, 141 to 161, 176 to 196, 210 to 230, 269 to 289, 304 to 324, and 326 to 346; these read LVRYWLYAVFAVLIAIVMVGG, LLARFVGFLVAVPLGFFWLTG, MLGLLALGGLQGAIGWWMVAS, IHLTTACVIITAVFYIARGLV, FAGWIVFAVLVQIYLGGLVAG, VQFVHRMFAYTVLLLAILHAV, TIVLVGLVFIQAMIGIATLLM, and APLHLGLTHQFFALVVLAFAV. His273 is a binding site for heme. His334 serves as a coordination point for heme.

It belongs to the COX15/CtaA family. Type 2 subfamily. In terms of assembly, interacts with CtaB. Heme b serves as cofactor.

The protein localises to the cell membrane. The catalysed reaction is Fe(II)-heme o + 2 A + H2O = Fe(II)-heme a + 2 AH2. It participates in porphyrin-containing compound metabolism; heme A biosynthesis; heme A from heme O: step 1/1. Its function is as follows. Catalyzes the conversion of heme O to heme A by two successive hydroxylations of the methyl group at C8. The first hydroxylation forms heme I, the second hydroxylation results in an unstable dihydroxymethyl group, which spontaneously dehydrates, resulting in the formyl group of heme A. In Brucella abortus (strain S19), this protein is Heme A synthase.